Here is a 254-residue protein sequence, read N- to C-terminus: Leucyl/phenylalanyl-tRNA--protein transferase (254 aa).

This sequence belongs to the L/F-transferase family.

Its subcellular location is the cytoplasm. It catalyses the reaction N-terminal L-lysyl-[protein] + L-leucyl-tRNA(Leu) = N-terminal L-leucyl-L-lysyl-[protein] + tRNA(Leu) + H(+). The catalysed reaction is N-terminal L-arginyl-[protein] + L-leucyl-tRNA(Leu) = N-terminal L-leucyl-L-arginyl-[protein] + tRNA(Leu) + H(+). The enzyme catalyses L-phenylalanyl-tRNA(Phe) + an N-terminal L-alpha-aminoacyl-[protein] = an N-terminal L-phenylalanyl-L-alpha-aminoacyl-[protein] + tRNA(Phe). Functionally, functions in the N-end rule pathway of protein degradation where it conjugates Leu, Phe and, less efficiently, Met from aminoacyl-tRNAs to the N-termini of proteins containing an N-terminal arginine or lysine. The polypeptide is Leucyl/phenylalanyl-tRNA--protein transferase (Burkholderia vietnamiensis (strain G4 / LMG 22486) (Burkholderia cepacia (strain R1808))).